Reading from the N-terminus, the 389-residue chain is Arrestin-C (389 aa).

Residues 369–389 (AQQEPSGESQEALAAEGNEGS) are disordered.

The protein belongs to the arrestin family. Homodimer; disulfide-linked in response to retinal illumination. Interacts with CXCR4; the interaction is dependent on the C-terminal phosphorylation of CXCR4 and modulates the calcium ion mobilization activity of CXCR4. Interacts with GPR84. In terms of tissue distribution, expressed in cone photoreceptors in the retina (at protein level).

It is found in the photoreceptor inner segment. The protein localises to the cell projection. It localises to the cilium. The protein resides in the photoreceptor outer segment. In terms of biological role, may play a role in an as yet undefined retina-specific signal transduction. Could bind to photoactivated-phosphorylated red/green opsins. The sequence is that of Arrestin-C (ARR3) from Bos taurus (Bovine).